The chain runs to 154 residues: Insulin-like growth factor 1 (154 aa).

A b region spans residues 50-78; sequence GPETLCGAELVDALQFVCGDRGFYFNKPT. 3 cysteine pairs are disulfide-bonded: Cys55/Cys97, Cys67/Cys110, and Cys96/Cys101. Residues 79 to 90 form a c region; that stretch reads GYGSSSRRAPQT. Positions 91 to 111 are a; the sequence is GIVDECCFRSCDLRRLEMYCA. The d stretch occupies residues 112–119; sequence PLKPAKSA. The propeptide at 120–154 is e peptide; it reads RSVRAQRHTDMPKAQKEVHLKNTSRGSAGNKNYRM. The disordered stretch occupies residues 121–154; sequence SVRAQRHTDMPKAQKEVHLKNTSRGSAGNKNYRM. Over residues 126-139 the composition is skewed to basic and acidic residues; the sequence is RHTDMPKAQKEVHL. The segment covering 140–154 has biased composition (polar residues); sequence KNTSRGSAGNKNYRM.

The protein belongs to the insulin family. As to quaternary structure, forms a ternary complex with IGFR1 and ITGAV:ITGB3. Forms a ternary complex with IGFR1 and ITGA6:ITGB4. Forms a ternary complex with IGFBP3 and ALS.

The protein localises to the secreted. The insulin-like growth factors, isolated from plasma, are structurally and functionally related to insulin but have a much higher growth-promoting activity. May be a physiological regulator of [1-14C]-2-deoxy-D-glucose (2DG) transport and glycogen synthesis in osteoblasts. Stimulates glucose transport in bone-derived osteoblastic (PyMS) cells and is effective at much lower concentrations than insulin, not only regarding glycogen and DNA synthesis but also with regard to enhancing glucose uptake. May play a role in synapse maturation. Ca(2+)-dependent exocytosis of IGF1 is required for sensory perception of smell in the olfactory bulb. Acts as a ligand for IGF1R. Binds to the alpha subunit of IGF1R, leading to the activation of the intrinsic tyrosine kinase activity which autophosphorylates tyrosine residues in the beta subunit thus initiating a cascade of down-stream signaling events leading to activation of the PI3K-AKT/PKB and the Ras-MAPK pathways. Binds to integrins ITGAV:ITGB3 and ITGA6:ITGB4. Its binding to integrins and subsequent ternary complex formation with integrins and IGFR1 are essential for IGF1 signaling. Induces the phosphorylation and activation of IGFR1, MAPK3/ERK1, MAPK1/ERK2 and AKT1. As part of the MAPK/ERK signaling pathway, acts as a negative regulator of apoptosis in cardiomyocytes via promotion of STUB1/CHIP-mediated ubiquitination and degradation of ICER-type isoforms of CREM. The chain is Insulin-like growth factor 1 from Bos taurus (Bovine).